The sequence spans 457 residues: F-box/LRR-repeat protein At2g42730 (457 aa).

In terms of domain architecture, F-box spans 4–50 (KDVISRLPDEVLGRILSLISTKEAVSTSVLSKRWKNMFVLVSNLDID). LRR repeat units lie at residues 265–288 (MDET…MRNL), 292–315 (IRNV…CKEM), and 318–343 (FDSL…LIKN).

In Arabidopsis thaliana (Mouse-ear cress), this protein is F-box/LRR-repeat protein At2g42730.